Reading from the N-terminus, the 483-residue chain is Alginate biosynthesis protein AlgA (483 aa).

It belongs to the mannose-6-phosphate isomerase type 2 family. In terms of assembly, monomer. It depends on Co(2+) as a cofactor.

It carries out the reaction D-mannose 6-phosphate = D-fructose 6-phosphate. The enzyme catalyses alpha-D-mannose 1-phosphate + GTP + H(+) = GDP-alpha-D-mannose + diphosphate. Its pathway is nucleotide-sugar biosynthesis; GDP-alpha-D-mannose biosynthesis; GDP-alpha-D-mannose from alpha-D-mannose 1-phosphate (GTP route): step 1/1. It participates in nucleotide-sugar biosynthesis; GDP-alpha-D-mannose biosynthesis; alpha-D-mannose 1-phosphate from D-fructose 6-phosphate: step 1/2. Produces a precursor for alginate polymerization. The alginate layer provides a protective barrier against host immune defenses and antibiotics. The protein is Alginate biosynthesis protein AlgA (algA) of Pseudomonas fluorescens.